Consider the following 85-residue polypeptide: F(1)-ATPase inhibitor IF(1), mitochondrial (85 aa).

A mitochondrion-targeting transit peptide spans Met-1–Tyr-22. Positions Lys-41 to Thr-84 form a coiled coil.

The protein belongs to the ATPase inhibitor family. In terms of assembly, monomer and homodimer. The protein aggregates less strongly with increasing pH.

The protein resides in the mitochondrion. Its function is as follows. Endogenous ATPase inhibitor, which inhibits specifically the reverse ATPase reaction of mitochondrial F(1)F(0)-type ATP synthase. It limits ATP depletion when the mitochondrial membrane potential falls below a threshold and the F(1)F(0)-ATP synthase starts hydrolyzing ATP to pump protons out of the mitochondrial matrix. Required to avoid the consumption of cellular ATP when the F(1)F(0)-ATP synthase enzyme acts as an ATP hydrolase. Functions through inserting its N-terminal part into the catalytically active F1-ATPase, thereby blocking its rotational movement and subsequently the ATP hydrolase activity. The sequence is that of F(1)-ATPase inhibitor IF(1), mitochondrial (INH1) from Saccharomyces cerevisiae (strain ATCC 204508 / S288c) (Baker's yeast).